We begin with the raw amino-acid sequence, 428 residues long: tRNA modification GTPase MnmE (428 aa).

Residues Arg-20, Glu-77, and Lys-117 each contribute to the (6S)-5-formyl-5,6,7,8-tetrahydrofolate site. Positions 213 to 351 constitute a TrmE-type G domain; that stretch reads GFEVAIVGSP…LVSRISDTLR (139 aa). Residues 223 to 228, 242 to 248, and 267 to 270 each bind GTP; these read NVGKST, SEYAGTT, and DTAG. Positions 227 and 248 each coordinate Mg(2+). A (6S)-5-formyl-5,6,7,8-tetrahydrofolate-binding site is contributed by Lys-428.

This sequence belongs to the TRAFAC class TrmE-Era-EngA-EngB-Septin-like GTPase superfamily. TrmE GTPase family. Homodimer. Heterotetramer of two MnmE and two MnmG subunits. Requires K(+) as cofactor.

Its subcellular location is the cytoplasm. Its function is as follows. Exhibits a very high intrinsic GTPase hydrolysis rate. Involved in the addition of a carboxymethylaminomethyl (cmnm) group at the wobble position (U34) of certain tRNAs, forming tRNA-cmnm(5)s(2)U34. The protein is tRNA modification GTPase MnmE of Ruegeria sp. (strain TM1040) (Silicibacter sp.).